The following is an 858-amino-acid chain: Elongation factor 2 (858 aa).

The tr-type G domain occupies 17-362; that stretch reads ANIRNMSVIA…MITIHLPSPV (346 aa). 26–33 contacts GTP; that stretch reads AHVDHGKS. Position 54 is a phosphothreonine (Thr-54). Residue Thr-57 is modified to Phosphothreonine; by EEF2K. Phosphothreonine is present on Thr-59. Lys-152 is modified (N6-succinyllysine). GTP is bound by residues 158–161 and 216–218; these read NKMD and SGL. N6-acetyllysine is present on Lys-235. Lys-239 carries the post-translational modification N6-acetyllysine; alternate. Residue Lys-239 forms a Glycyl lysine isopeptide (Lys-Gly) (interchain with G-Cter in SUMO1); alternate linkage. The residue at position 265 (Tyr-265) is a Phosphotyrosine; by CSK. At Lys-272 the chain carries N6-acetyllysine; alternate. Position 272 is an N6-succinyllysine; alternate (Lys-272). N6-acetyllysine is present on Lys-275. Lys-322 participates in a covalent cross-link: Glycyl lysine isopeptide (Lys-Gly) (interchain with G-Cter in SUMO). Position 325 is a phosphoserine (Ser-325). Residue Tyr-373 is modified to Phosphotyrosine; by CSK. Thr-435 carries the post-translational modification Phosphothreonine. An N6-acetyllysine mark is found at Lys-439 and Lys-445. Residue Ser-502 is modified to Phosphoserine. Residue Lys-525 is modified to N6,N6,N6-trimethyllysine; by EEF2KMT. Lys-529 participates in a covalent cross-link: Glycyl lysine isopeptide (Lys-Gly) (interchain with G-Cter in SUMO). Position 572 is an N6-succinyllysine (Lys-572). Phosphoserine; by CDK2 is present on Ser-595. Residue Lys-619 is modified to N6-acetyllysine. His-715 bears the Diphthamide mark.

It belongs to the TRAFAC class translation factor GTPase superfamily. Classic translation factor GTPase family. EF-G/EF-2 subfamily. Binds to 80S ribosomes. Actively translating ribosomes show mutually exclusive binding of eIF5a (EIF5A or EIF5A2) and EEF2/eEF2. Interacts with SERBP1; interaction sequesters EEF2/eEF2 at the A-site of the ribosome, thereby blocking the interaction sites of the mRNA-tRNA complex, promoting ribosome stabilization and hibernation. Interacts with HABP4; interaction takes place at the A-site of hibernating ribosomes and promotes ribosome stabilization. Component of the mRNA surveillance SURF complex, at least composed of ERF1, ERF3 (ERF3A or ERF3B), EEF2, UPF1/RENT1, SMG1, SMG8 and SMG9. Interacts with RBPMS2. Phosphorylation by EF-2 kinase completely inactivates EF-2; it requires prior phosphorylation by CDK2 at Ser-595 during mitotic prometaphase. Phosphorylation by CSK promotes SUMOylation, proteolytic cleavage, and nuclear translocation if the C-terminal fragment. In terms of processing, diphthamide is 2-[3-carboxyamido-3-(trimethyl-ammonio)propyl]histidine. Post-translationally, ISGylated. Proteolytically processed at two sites following phosphorylation by CSK. In terms of processing, SUMOylated following phosphorylation by CSK, promotes proteolytic cleavage.

It localises to the cytoplasm. The protein localises to the nucleus. It carries out the reaction GTP + H2O = GDP + phosphate + H(+). In terms of biological role, catalyzes the GTP-dependent ribosomal translocation step during translation elongation. During this step, the ribosome changes from the pre-translocational (PRE) to the post-translocational (POST) state as the newly formed A-site-bound peptidyl-tRNA and P-site-bound deacylated tRNA move to the P and E sites, respectively. Catalyzes the coordinated movement of the two tRNA molecules, the mRNA and conformational changes in the ribosome. The protein is Elongation factor 2 (EEF2) of Callithrix jacchus (White-tufted-ear marmoset).